The primary structure comprises 772 residues: MMEELHSLDPRRQELLEARFTGVGVSKGPLNSESSNQSLCSVGSLSDKEVETPEKKQNDQRNRKRKAEPYETSQGKGTPRGHKISDYFEFAGGSAPGTSPGRSVPPVARSSPQHSLSNPLPRRVEQPLYGLDGSAAKEATEEQSALPTLMSVMLAKPRLDTEQLAQRGAGLCFTFVSAQQNSPSSTGSGNTEHSCSSQKQISIQHRQTQSDLTIEKISALENSKNSDLEKKEGRIDDLLRANCDLRRQIDEQQKMLEKYKERLNRCVTMSKKLLIEKSKQEKMACRDKSMQDRLRLGHFTTVRHGASFTEQWTDGYAFQNLIKQQERINSQREEIERQRKMLAKRKPPAMGQAPPATNEQKQRKSKTNGAENETPSSGNTELKDTAPALGAHSLLRLTLAEYHEQEEIFKLRLGHLKKEEAEIQAELERLERVRNLHIRELKRIHNEDNSQFKDHPTLNDRYLLLHLLGRGGFSEVYKAFDLTEQRYVAVKIHQLNKNWRDEKKENYHKHACREYRIHKELDHPRIVKLYDYFSLDTDSFCTVLEYCEGNDLDFYLKQHKLMSEKEARSIIMQIVNALKYLNEIKPPIIHYDLKPGNILLVNGTACGEIKITDFGLSKIMDDDSYNSVDGMELTSQGAGTYWYLPPECFVVGKEPPKISNKVDVWSVGVIFYQCLYGRKPFGHNQSQQDILQENTILKATEVQFPPKPVVTPEAKAFIRRCLAYRKEDRIDVQQLACDPYLLPHIRKSVSTSSPAGAAIASTSGASNNSSSN.

The tract at residues 24 to 126 (GVSKGPLNSE…SNPLPRRVEQ (103 aa)) is disordered. The span at 29 to 44 (PLNSESSNQSLCSVGS) shows a compositional bias: polar residues. Basic and acidic residues predominate over residues 46–61 (SDKEVETPEKKQNDQR). Phosphoserine occurs at positions 73, 94, 99, 115, 117, and 134. The interval 180–208 (QNSPSSTGSGNTEHSCSSQKQISIQHRQT) is disordered. Residues 225 to 276 (NSDLEKKEGRIDDLLRANCDLRRQIDEQQKMLEKYKERLNRCVTMSKKLLIE) are required for interaction with TLK1 and DYNLL1/LC8. Coiled coils occupy residues 225–276 (NSDL…LLIE) and 317–347 (AFQNLIKQQERINSQREEIERQRKMLAKRKP). Positions 342–385 (LAKRKPPAMGQAPPATNEQKQRKSKTNGAENETPSSGNTELKDT) are disordered. Positions 367–380 (TNGAENETPSSGNT) are enriched in polar residues. Residues 403 to 451 (HEQEEIFKLRLGHLKKEEAEIQAELERLERVRNLHIRELKRIHNEDNSQ) are a coiled coil. One can recognise a Protein kinase domain in the interval 462-741 (YLLLHLLGRG…VQQLACDPYL (280 aa)). Residues 468-476 (LGRGGFSEV) and K491 contribute to the ATP site. The active-site Proton acceptor is the D592. Residue S750 is modified to Phosphoserine; by CHEK1.

Belongs to the protein kinase superfamily. Ser/Thr protein kinase family. As to quaternary structure, monomer. May form homodimers; homodimerization may enhance autophosphoylation and enzymatic activity. Heterodimer with TLK1. Interacts with YWHAZ; association with 14-3-3 proteins such as YWHAZ regulates subcellular location. May also interact with FEZ1/LZTS1 and FEZ2. Interacts with CHD7 and CHD8. Interacts with DYNLL1/LC8. Mg(2+) serves as cofactor. Post-translationally, phosphorylated at Ser-750, probably by CHEK1. In terms of processing, autophosphorylated; phosphorylation promotes the assembly of higher order oligomers and enzymatic activity. As to expression, detected in placenta, fetal liver, kidney, pancreas, heart and skeletal muscle. Highly expressed in testis. Detected in spleen, thymus, colon, ovary, small intestine, prostate and peripheral blood leukocytes. Almost undetectable in liver and lung.

The protein localises to the nucleus. The protein resides in the nucleoplasm. It localises to the cytoplasm. It is found in the perinuclear region. Its subcellular location is the cytoskeleton. It carries out the reaction L-seryl-[protein] + ATP = O-phospho-L-seryl-[protein] + ADP + H(+). The enzyme catalyses L-threonyl-[protein] + ATP = O-phospho-L-threonyl-[protein] + ADP + H(+). Cell cycle-regulated, with maximal activity in the S-phase. Rapidly and transiently inhibited by phosphorylation following the generation of DNA double-stranded breaks during S-phase, probably by CHEK1, possibly at Ser-750. This inhibition is cell cycle checkpoint- and ATM-dependent. In terms of biological role, serine/threonine-protein kinase involved in the process of chromatin assembly and probably also DNA replication, transcription, repair, and chromosome segregation. Phosphorylates the chromatin assembly factors ASF1A and ASF1B. Phosphorylation of ASF1A prevents its proteasome-mediated degradation, thereby enhancing chromatin assembly. Negative regulator of amino acid starvation-induced autophagy. This is Serine/threonine-protein kinase tousled-like 2 from Homo sapiens (Human).